Reading from the N-terminus, the 565-residue chain is Sulfite reductase [NADPH] hemoprotein beta-component (565 aa).

The [4Fe-4S] cluster site is built by Cys-429, Cys-435, Cys-474, and Cys-478. Cys-478 serves as a coordination point for siroheme.

Belongs to the nitrite and sulfite reductase 4Fe-4S domain family. As to quaternary structure, alpha(8)-beta(8). The alpha component is a flavoprotein, the beta component is a hemoprotein. The cofactor is siroheme. [4Fe-4S] cluster serves as cofactor.

It catalyses the reaction hydrogen sulfide + 3 NADP(+) + 3 H2O = sulfite + 3 NADPH + 4 H(+). It functions in the pathway sulfur metabolism; hydrogen sulfide biosynthesis; hydrogen sulfide from sulfite (NADPH route): step 1/1. Component of the sulfite reductase complex that catalyzes the 6-electron reduction of sulfite to sulfide. This is one of several activities required for the biosynthesis of L-cysteine from sulfate. This chain is Sulfite reductase [NADPH] hemoprotein beta-component, found in Shewanella piezotolerans (strain WP3 / JCM 13877).